The following is a 317-amino-acid chain: Dimethyladenosine transferase (317 aa).

Positions 1 to 22 are disordered; that stretch reads MAKAPAKKFSGGAQRESAGGEQ. The S-adenosyl-L-methionine site is built by H37, L39, G64, E85, D113, and N128.

The protein belongs to the class I-like SAM-binding methyltransferase superfamily. rRNA adenine N(6)-methyltransferase family.

It carries out the reaction adenosine(1779)/adenosine(1780) in 18S rRNA + 4 S-adenosyl-L-methionine = N(6)-dimethyladenosine(1779)/N(6)-dimethyladenosine(1780) in 18S rRNA + 4 S-adenosyl-L-homocysteine + 4 H(+). Functionally, specifically dimethylates two adjacent adenosines in the loop of a conserved hairpin near the 3'-end of 18S rRNA in the 40S particle. The sequence is that of Dimethyladenosine transferase (DIM1) from Yarrowia lipolytica (strain CLIB 122 / E 150) (Yeast).